The chain runs to 610 residues: Terminase, large subunit (610 aa).

Residues 30–94 (RKDEDGIHWI…SRYMGLPNLK (65 aa)) are ssDNA-binding. The tract at residues 131 to 301 (DYGVIKVQLR…NHFYDIWTAA (171 aa)) is ATPase activity. ATP-binding residues include glutamine 138 and glutamine 143. The Walker A motif motif lies at 161–167 (SRQLGKT). Arginine 202 serves as a coordination point for ATP. Residues 251-256 (MIYIDE) carry the Walker B motif motif. Catalysis depends on glutamate 256, which acts as the For ATPase activity. An ATPase coupling motif is present at residues 285-287 (TTT). The interval 328 to 352 (IFDDGWQWSIQTINGSSLAQFRQEH) is binding to the portal protein. Residues 360-559 (SGTLISGMKL…FGWLSTQSKF (200 aa)) are nuclease activity. Mg(2+) contacts are provided by aspartate 401, glutamate 458, and aspartate 542.

The protein belongs to the Tequatrovirus large terminase family. As to quaternary structure, interacts with the terminase small subunit; the active complex is composed of a pentamer of terminase large subunits and a dodecamer of terminase small subunits. Interacts with the portal protein. Interacts with the RNA polymerase sigma factor gp55. Mg(2+) is required as a cofactor. In terms of processing, phosphorylated.

Its activity is regulated as follows. Stimulated up to 50 to 100-fold by the terminase small subunit. Modestly activated by portal protein and single-stranded binding protein gp32 multimers. Functionally, the terminase large subunit acts as an ATP driven molecular motor necessary for viral DNA translocation into empty capsids and as an endonuclease that cuts the viral genome to initiate and to end a packaging reaction. The terminase lies at a unique vertex of the procapsid and is composed of two subunits, a small terminase subunit involved in viral DNA recognition (packaging sequence), and a large terminase subunit possessing endonucleolytic and ATPase activities. Both terminase subunits heterooligomerize and are docked on the portal protein to form the packaging machine. The terminase large subunit exhibits endonuclease activity and cleaves the viral genome concatemer once the capsid is full (headful packaging). Once the capsid is packaged with the DNA, the terminase complex is substituted by the tail. This is Terminase, large subunit (17) from Escherichia coli (Bacteriophage T4).